A 44-amino-acid chain; its full sequence is Thymosin beta-4 (44 aa).

Basic and acidic residues predominate over residues 1-25 (MSDKPDMAEIEKFDKSKLKKTETQE). The interval 1–44 (MSDKPDMAEIEKFDKSKLKKTETQEKNPLPSKETIEQEKQAGES) is disordered. Residue serine 2 is modified to N-acetylserine. A Phosphoserine modification is found at serine 2. Lysine 4 is subject to N6-acetyllysine. Residue lysine 12 is modified to N6-acetyllysine; alternate. A Glycyl lysine isopeptide (Lys-Gly) (interchain with G-Cter in SUMO2); alternate cross-link involves residue lysine 12. Phosphothreonine is present on threonine 23. N6-acetyllysine is present on lysine 26. Phosphoserine is present on serine 31. Lysine 32 is modified (N6-acetyllysine). Over residues 33 to 44 (ETIEQEKQAGES) the composition is skewed to basic and acidic residues. Threonine 34 carries the post-translational modification Phosphothreonine. Lysine 39 carries the post-translational modification N6-acetyllysine.

Belongs to the thymosin beta family. Identified in a complex composed of ACTA1, COBL, GSN AND TMSB4X. Interacts with SERPINB1. In terms of processing, acSDKP is inactivated by ACE, which removes the dipeptide Lys-Pro from its C-terminus.

Its subcellular location is the cytoplasm. The protein localises to the cytoskeleton. Functionally, plays an important role in the organization of the cytoskeleton. Binds to and sequesters actin monomers (G actin) and therefore inhibits actin polymerization. Potent inhibitor of bone marrow derived stem cell differentiation. Acts by inhibits the entry of hematopoietic pluripotent stem cells into the S-phase. This is Thymosin beta-4 (TMSB4) from Bos taurus (Bovine).